A 586-amino-acid polypeptide reads, in one-letter code: MRKHPQTATKHLFVSGGVASSLGKGLTASSLGQLLTARGLHVTMQKLDPYLNVDPGTMNPFQHGEVFVTEDGAETDLDVGHYERFLDRNLPGSANVTTGQVYSTVIAKERRGEYLGDTVQVIPHITDEIKRRILAMAQPDADGNRPDVVITEIGGTVGDIESQPFLEAARQVRHYLGREDVFFLHVSLVPYLAPSGELKTKPTQHSVAALRSIGITPDALILRCDRDVPEALKNKIALMCDVDIDGVISTPDAPSIYDIPKVLHREELDAFVVRRLNLPFRDVDWTEWDDLLRRVHEPHETVRIALVGKYVELSDAYLSVAEALRAGGFKHRAKVEICWVASDGCETTSGAAAALGDVHGVLIPGGFGIRGIEGKIGAIAYARARGLPVLGLCLGLQCIVIEAARSVGLTNANSAEFDPDTPDPVIATMPDQEEIVAGEADLGGTMRLGSYPAVLEPDSVVAQAYQTTQVSERHRHRYEVNNAYRDKIAESGLRFSGTSPDGHLVEFVEYPPDRHPFVVGTQAHPELKSRPTRPHPLFVAFVGAAIDYKAGELLPVEIPEIPEHTPNGSSHRDGVGQPLPEPASRG.

Residues 1-278 (MRKHPQTATK…DAFVVRRLNL (278 aa)) form an amidoligase domain region. S20 contacts CTP. Residue S20 participates in UTP binding. ATP is bound by residues 21-26 (SLGKGL) and D78. 2 residues coordinate Mg(2+): D78 and E152. CTP is bound by residues 159–161 (DIE), 199–204 (KTKPTQ), and K235. Residues 199-204 (KTKPTQ) and K235 each bind UTP. One can recognise a Glutamine amidotransferase type-1 domain in the interval 303–551 (RIALVGKYVE…VGAAIDYKAG (249 aa)). L-glutamine is bound at residue G366. The active-site Nucleophile; for glutamine hydrolysis is C393. L-glutamine is bound by residues 394–397 (LGLQ), E416, and R477. Active-site residues include H524 and E526. Positions 560–586 (EIPEHTPNGSSHRDGVGQPLPEPASRG) are disordered.

This sequence belongs to the CTP synthase family. As to quaternary structure, homotetramer.

The enzyme catalyses UTP + L-glutamine + ATP + H2O = CTP + L-glutamate + ADP + phosphate + 2 H(+). It catalyses the reaction L-glutamine + H2O = L-glutamate + NH4(+). The catalysed reaction is UTP + NH4(+) + ATP = CTP + ADP + phosphate + 2 H(+). The protein operates within pyrimidine metabolism; CTP biosynthesis via de novo pathway; CTP from UDP: step 2/2. Allosterically activated by GTP, when glutamine is the substrate; GTP has no effect on the reaction when ammonia is the substrate. The allosteric effector GTP functions by stabilizing the protein conformation that binds the tetrahedral intermediate(s) formed during glutamine hydrolysis. Inhibited by the product CTP, via allosteric rather than competitive inhibition. Catalyzes the ATP-dependent amination of UTP to CTP with either L-glutamine or ammonia as the source of nitrogen. Regulates intracellular CTP levels through interactions with the four ribonucleotide triphosphates. The sequence is that of CTP synthase from Mycobacterium tuberculosis (strain ATCC 25177 / H37Ra).